The following is a 112-amino-acid chain: T cell receptor alpha variable 34 (112 aa).

Residues 1 to 21 (METVLQVLLGILGFQAAWVSS) form the signal peptide. In terms of domain architecture, Ig-like spans 22 to 112 (QELEQSPQSL…HAGIYLCGAD (91 aa)). N-linked (GlcNAc...) asparagine glycans are attached at residues Asn38 and Asn42. Cys43 and Cys109 are oxidised to a cystine.

In terms of assembly, alpha-beta TR is a heterodimer composed of an alpha and beta chain; disulfide-linked. The alpha-beta TR is associated with the transmembrane signaling CD3 coreceptor proteins to form the TR-CD3 (TcR or TCR). The assembly of alpha-beta TR heterodimers with CD3 occurs in the endoplasmic reticulum where a single alpha-beta TR heterodimer associates with one CD3D-CD3E heterodimer, one CD3G-CD3E heterodimer and one CD247 homodimer forming a stable octameric structure. CD3D-CD3E and CD3G-CD3E heterodimers preferentially associate with TR alpha and TR beta chains, respectively. The association of the CD247 homodimer is the last step of TcR assembly in the endoplasmic reticulum and is required for transport to the cell surface.

It localises to the cell membrane. V region of the variable domain of T cell receptor (TR) alpha chain that participates in the antigen recognition. Alpha-beta T cell receptors are antigen specific receptors which are essential to the immune response and are present on the cell surface of T lymphocytes. Recognize peptide-major histocompatibility (MH) (pMH) complexes that are displayed by antigen presenting cells (APC), a prerequisite for efficient T cell adaptive immunity against pathogens. Binding of alpha-beta TR to pMH complex initiates TR-CD3 clustering on the cell surface and intracellular activation of LCK that phosphorylates the ITAM motifs of CD3G, CD3D, CD3E and CD247 enabling the recruitment of ZAP70. In turn ZAP70 phosphorylates LAT, which recruits numerous signaling molecules to form the LAT signalosome. The LAT signalosome propagates signal branching to three major signaling pathways, the calcium, the mitogen-activated protein kinase (MAPK) kinase and the nuclear factor NF-kappa-B (NF-kB) pathways, leading to the mobilization of transcription factors that are critical for gene expression and essential for T cell growth and differentiation. The T cell repertoire is generated in the thymus, by V-(D)-J rearrangement. This repertoire is then shaped by intrathymic selection events to generate a peripheral T cell pool of self-MH restricted, non-autoaggressive T cells. Post-thymic interaction of alpha-beta TR with the pMH complexes shapes TR structural and functional avidity. This Homo sapiens (Human) protein is T cell receptor alpha variable 34.